The following is a 327-amino-acid chain: Malate dehydrogenase (327 aa).

Residue 12–18 (GAAGQIA) participates in NAD(+) binding. 2 residues coordinate substrate: Arg93 and Arg99. Residues Asn106, Gln113, and 130–132 (VGN) contribute to the NAD(+) site. The substrate site is built by Asn132 and Arg163. Catalysis depends on His188, which acts as the Proton acceptor.

This sequence belongs to the LDH/MDH superfamily. MDH type 2 family.

The catalysed reaction is (S)-malate + NAD(+) = oxaloacetate + NADH + H(+). Catalyzes the reversible oxidation of malate to oxaloacetate. The protein is Malate dehydrogenase of Paraburkholderia phytofirmans (strain DSM 17436 / LMG 22146 / PsJN) (Burkholderia phytofirmans).